A 494-amino-acid polypeptide reads, in one-letter code: Autocrine proliferation repressor protein A (494 aa).

An N-terminal signal peptide occupies residues 1–18; the sequence is MSKLLILLLLSLVASIFS. N-linked (GlcNAc...) asparagine glycosylation is found at Asn37, Asn153, and Asn302.

This sequence belongs to the pqaA family. As to quaternary structure, interacts with cfaD.

The protein resides in the secreted. Inhibitor that slows proliferation of secreting cells (also known as chalone). May function by binding to cell surface receptors. Requires cfaD for activity. Overexpression slows proliferation. This Dictyostelium discoideum (Social amoeba) protein is Autocrine proliferation repressor protein A (aprA).